The primary structure comprises 351 residues: Probable dual-specificity RNA methyltransferase RlmN (351 aa).

Residue Glu92 is the Proton acceptor of the active site. The 237-residue stretch at 98-334 folds into the Radical SAM core domain; it reads SGDRLTVCVS…VRWSKGLGAD (237 aa). Cys105 and Cys337 form a disulfide bridge. The [4Fe-4S] cluster site is built by Cys112, Cys116, and Cys119. S-adenosyl-L-methionine is bound by residues 159-160, Ser189, 218-220, and Asn294; these read GE and SLH. Cys337 serves as the catalytic S-methylcysteine intermediate.

This sequence belongs to the radical SAM superfamily. RlmN family. [4Fe-4S] cluster is required as a cofactor.

The protein localises to the cytoplasm. It catalyses the reaction adenosine(2503) in 23S rRNA + 2 reduced [2Fe-2S]-[ferredoxin] + 2 S-adenosyl-L-methionine = 2-methyladenosine(2503) in 23S rRNA + 5'-deoxyadenosine + L-methionine + 2 oxidized [2Fe-2S]-[ferredoxin] + S-adenosyl-L-homocysteine. The catalysed reaction is adenosine(37) in tRNA + 2 reduced [2Fe-2S]-[ferredoxin] + 2 S-adenosyl-L-methionine = 2-methyladenosine(37) in tRNA + 5'-deoxyadenosine + L-methionine + 2 oxidized [2Fe-2S]-[ferredoxin] + S-adenosyl-L-homocysteine. Functionally, specifically methylates position 2 of adenine 2503 in 23S rRNA and position 2 of adenine 37 in tRNAs. This chain is Probable dual-specificity RNA methyltransferase RlmN, found in Synechococcus sp. (strain ATCC 27144 / PCC 6301 / SAUG 1402/1) (Anacystis nidulans).